The chain runs to 167 residues: Large ribosomal subunit protein uL23 (167 aa).

The tract at residues 1–130 is large ribosomal subunit protein uL23; it reads MNVNEIIKGP…ELEAKNKEIA (130 aa). 2 disordered regions span residues 91-112 and 137-167; these read FEDESPQDQKDSETISENTDEK and QAELAKKESETNENQEKKIENQTENQENSAK. 2 stretches are compositionally biased toward basic and acidic residues: residues 97–112 and 137–157; these read QDQKDSETISENTDEK and QAELAKKESETNENQEKKIEN. A unknown region spans residues 131–167; the sequence is EKLAKKQAELAKKESETNENQEKKIENQTENQENSAK. Positions 158–167 are enriched in polar residues; that stretch reads QTENQENSAK.

The protein belongs to the universal ribosomal protein uL23 family. Part of the 50S ribosomal subunit. Contacts protein L29, and trigger factor when it is bound to the ribosome.

Its function is as follows. One of the early assembly proteins it binds 23S rRNA. One of the proteins that surrounds the polypeptide exit tunnel on the outside of the ribosome. Forms the main docking site for trigger factor binding to the ribosome. The polypeptide is Large ribosomal subunit protein uL23 (Mesomycoplasma hyopneumoniae (strain 7448) (Mycoplasma hyopneumoniae)).